A 515-amino-acid chain; its full sequence is Maturase K (515 aa).

The protein belongs to the intron maturase 2 family. MatK subfamily.

It is found in the plastid. It localises to the chloroplast. Functionally, usually encoded in the trnK tRNA gene intron. Probably assists in splicing its own and other chloroplast group II introns. This is Maturase K from Picea abies (Norway spruce).